A 188-amino-acid polypeptide reads, in one-letter code: MPVTPTSLADHLLVALPSLLDATFARSVALICQHDENGAMGVLVNQPSEYTLGEVLAQMDITTGDGDLQARMVLNGGPVHPERGFVIHDDARAWDSSLTVGDGLYLTTSRDILEAMARGEGPANAVVTLGCAGWGAGQLESELSENSWLTVPADAELVFQLPLEQRWQGAASRIGVDLFRLTDYSGHV.

It belongs to the UPF0301 (AlgH) family.

The protein is UPF0301 protein Smlt1098 of Stenotrophomonas maltophilia (strain K279a).